The following is a 337-amino-acid chain: Adenine deaminase (337 aa).

3 residues coordinate Zn(2+): His14, His16, and His194. Glu197 (proton donor) is an active-site residue. A Zn(2+)-binding site is contributed by Asp275. Asp276 is a substrate binding site.

This sequence belongs to the metallo-dependent hydrolases superfamily. Adenosine and AMP deaminases family. Adenine deaminase type 2 subfamily. Requires Zn(2+) as cofactor.

It catalyses the reaction adenine + H2O + H(+) = hypoxanthine + NH4(+). Functionally, catalyzes the hydrolytic deamination of adenine to hypoxanthine. Plays an important role in the purine salvage pathway and in nitrogen catabolism. The chain is Adenine deaminase from Vibrio parahaemolyticus serotype O3:K6 (strain RIMD 2210633).